Reading from the N-terminus, the 252-residue chain is Protein IL-40 (252 aa).

The signal sequence occupies residues Met-1–Ser-18. Asn-82 and Asn-177 each carry an N-linked (GlcNAc...) asparagine glycan.

In terms of tissue distribution, expressed in bone marrow, spleen and lymph node.

It is found in the secreted. Its function is as follows. Probable B cell-associated cytokine that plays a role in the regulation of humoral immune responses. Involved in lymphocyte B cell development and immunoglobulin/IgA production. The protein is Protein IL-40 of Mus musculus (Mouse).